Reading from the N-terminus, the 326-residue chain is MSQVKRANENRETARFIKKHKKQVTNPIDEKNGTSNCIVRVPIALYVSLAPMYLENPLQGVMKQHLNPLVMKYNNKVGGVVLGYEGLKILDADPLSKEDTSEKLIKITPDTPFGFTWCHVNLYVWQPQVGDVLEGYIFIQSASHIGLLIHDAFNASIKKNNIPVDWTFVHNDVEEDADVINTDENNGNNNNEDNKDSNGGSNSLGKFSFGNRSLGHWVDSNGEPIDGKLRFTVRNVHTTGRVVSVDGTLISDADEEGNGYNSSRSQAESLPIVSNKKIVFDDEVSIENKESHKELDLPEVKEDNGSEIVYEENTSESNDGESSDSD.

Residues 179–202 (VINTDENNGNNNNEDNKDSNGGSN) form a disordered region. Residues 182 to 202 (TDENNGNNNNEDNKDSNGGSN) show a composition bias toward low complexity. Phosphoserine is present on residues Ser244, Ser251, Ser265, Ser269, and Ser285. A compositionally biased stretch (basic and acidic residues) spans 288-304 (NKESHKELDLPEVKEDN). The tract at residues 288 to 326 (NKESHKELDLPEVKEDNGSEIVYEENTSESNDGESSDSD) is disordered. Acidic residues predominate over residues 309-326 (VYEENTSESNDGESSDSD).

This sequence belongs to the eukaryotic RPA43 RNA polymerase subunit family. In terms of assembly, component of the RNA polymerase I (Pol I) complex consisting of 14 subunits: RPA135, RPA190, RPC40, RPA14, RPB5, RPO26, RPA43, RPB8, RPA12, RPB10, RPC19, RPC10, RPA49 and RPA34. The complex is composed of a horseshoe-shaped core containing ten subunits (RPA135, RPA190, RPB5, RPO26, RPB8, RPB10, RPC10, RPA12, RPC19 and RPC40) where RPA135 and RPA190 form the DNA-binding cleft. Outside of the core, RPA14 and RPA43 form the stalk that mediates interactions with transcription initiation factors and newly synthesized RNA. Interacts with RPO26/ABC23 and with the initiation factor RRN3. In terms of processing, contains an average of four phosphates per molecule.

It is found in the nucleus. Its subcellular location is the nucleolus. Functionally, DNA-dependent RNA polymerases catalyze the transcription of DNA into RNA using the four ribonucleoside triphosphates as substrates. Component of RNA polymerase I (Pol I) which synthesizes ribosomal RNA precursors. Besides, RNA polymerase I has intrinsic RNA cleavage activity. Through its association with RRN3 is involved in recruitment of Pol I to rDNA promoters. In vitro, the A13-A43 subcomplex binds single-stranded RNA. This Saccharomyces cerevisiae (strain ATCC 204508 / S288c) (Baker's yeast) protein is DNA-directed RNA polymerase I subunit RPA43 (RPA43).